Reading from the N-terminus, the 702-residue chain is Transposon Tn7 transposition protein TnsB (702 aa).

The segment at 1–139 (MWQINEVVLF…GQTPNALIPD (139 aa)) is DNA-binding domain 1 (DBD1). Positions 105–124 (VEHVVQEHKVTKATVYKLLR) form a DNA-binding region, H-T-H motif. The disordered stretch occupies residues 137-160 (IPDYKNSGAPGERRSATGTAKIGR). The linker 1 stretch occupies residues 140–172 (YKNSGAPGERRSATGTAKIGRAREYGKGEGTKV). The interval 173 to 233 (TPEIERLFRL…QFRYFYDREY (61 aa)) is DNA-binding domain 2 (DBD2). The linker 2 stretch occupies residues 234–267 (PKAQRLKSRVKAGVYKKDVRPLSSTATSQALGPG). An Integrase catalytic domain is found at 262–480 (QALGPGSRYE…IPVQLWQWGM (219 aa)). Positions 268–582 (SRYEIDATIA…RSRQFKGLSF (315 aa)) are catalytic domain (CD). Positions 589 to 702 (QAQEKHNKAN…FQDPPEKDES (114 aa)) are C-terminal domain. The disordered stretch occupies residues 623 to 702 (KLTPSTTEPK…FQDPPEKDES (80 aa)).

As to quaternary structure, heteromer with TnsA.

Its function is as follows. Sequence-specific, DNA-binding protein required for Tn7 transposition. Recognizes sequences necessary for recombination at both left and right ends of Tn7 and, together with TnsA, forms the transposase. TnsB executes the 3'-DNA strand breakage and joining reactions. TnsB binding introduces DNA bending. There are 3 DNA-binding sites in the left and 4 in the right end of Tn7; as TnsB levels increase more TnsB is bound, suggesting high protein levels contribute to transposon immunity. Binding of TnsB to the transposon right end represses expression of the downstream transposition genes. TnsABC + TnsD promote high-frequency insertion of Tn7 into a specific target site known as att-Tn7 whereas TnsABC + TnsE promote low-frequency insertion into many different sites. The polypeptide is Transposon Tn7 transposition protein TnsB (Escherichia coli).